The primary structure comprises 144 residues: Deoxyuridine 5'-triphosphate nucleotidohydrolase (144 aa).

Residues 63 to 65 (RSG), asparagine 76, and 80 to 82 (TID) each bind substrate.

The protein belongs to the dUTPase family. Requires Mg(2+) as cofactor.

It catalyses the reaction dUTP + H2O = dUMP + diphosphate + H(+). Its pathway is pyrimidine metabolism; dUMP biosynthesis; dUMP from dCTP (dUTP route): step 2/2. In terms of biological role, this enzyme is involved in nucleotide metabolism: it produces dUMP, the immediate precursor of thymidine nucleotides and it decreases the intracellular concentration of dUTP so that uracil cannot be incorporated into DNA. The polypeptide is Deoxyuridine 5'-triphosphate nucleotidohydrolase (Porphyromonas gingivalis (strain ATCC BAA-308 / W83)).